The following is a 1882-amino-acid chain: MSSICFAGGNHARLPSKAAYYRAISDRELDREGRFPCGCLAQYTVQAPPPAKTQEKAVGRSADLQKGNVAPLKKQRCDVVVAVSGPPPLELVYPARVGQHRLDQPSKGPLAVPSAKQTSTAMEVVLSAEEAAITAPWLLRPCKGEAPPPPPLTQRQQFAALKKRLAVKGQQIIREHIRARKAAKYAAIAKAKKAAALAAVKAAQEAPRLAAQKAAISKILRDRDVAALPPPPPPSAARLAAEAELASKAESLRRLKAFKTFSRVRPALNTSFPPPPPPPPARSSELLAAFEAAMNRSQPVQGGFSLPTRKGVYVAPTVQGVVRAGLRAQKGFLNAVSTGIVAGARILKSKSQNWFRRSMGIAHDYVEGCMASTVLGCAGPVVQRQEACSVVAAPPIVEPVLWVPPLSEYANDFPKLTCSTFTEWQRPRKQSIAISNLFRKLIDRALLVSGVSLIASVLLFEIAENFAVRQAVCPVEMPSCATSVSEKSLVSLDEGNFYLRKYLSPPPYPFGRESFYFQARPRFIGPMPSMVRAVPQIVQQPTMTEELEFEVPSSWSSPLPLFANFKVNRGACFLQVLPQRVVLPDECMDLLSLFEDQLPEGPLPSFSWSSPLPLFANFKVNRGACFLQVLPQRVVLPDECMDLLSLFEDQLPEGPLPSFSWSSPLPLFASFKVNRGACFLQVLPARKVVSDEFMDVLPFLFSPLVSHQEEEPEMVPAVLEAADSVGDITEAFFDDLECESFYDSYSDEEEAEWAEVPRCKTMSELCASLTLAGDAEGLRKSHGVFLKRLVTYLQSFEEPLYSSRAFYSVKVKPVYRPKKFEGHIDCTCLDGNMGEWEWRESVDAMWRCPGRLLNTKRTFTRDDWERVQYLRIGFNEGRYRRNWRVLNLEEMDLSLHEYPEISSAPVQSSLFSRVVDRGATLASSIPFVTRSNCQSSLGTPGLNVHTIHQEAPTTLRAPPFTGARNVMGSSDAGANAAPYRSEARKRWLSRKQEDSQEDNIKRYADKHGISFEEARAVYKAPKEGVPTQRSILPDVRDAYSARSAGARVRSLFGGSPTTRAQRTEDFVLTSPSAGDASSFSFYFNPVSEQEMAEQERGGNTMLSLDAVEVVIDPVGMPGDDTDLTVMVLWCQNSDDQRALIGAMSTFVGNGLARAVFYPGLKLLYANCRVRDGRVLKVIVSSTNSTLTHGLPQAQVSIGTLRQHLGPGHDRTISGALYASQQQGFNIRATEQGGAVTFAPQGGHVEGIPSANVQMGAGEHLIQAGPMQWRLQRSQSSRFVVSGHSRTRGSSLFTGSVDRTQQGTGAFEDPGFLPPRNSSVQGGSWQEGTEAAYLGKVTCAKDAKGGTLLHTLDIIKECKSQNLLRYKEWQRQGFLHGKLRLRCFIPTNIFCGHSMMCSLDAFGRYDSNVLGASFPVKLASLLPTEVISLADGPVVTWTFDIGRLCGHGLYYSEGAYARPKIYFLVLSDNDVPAEADWQFTYQLLFEDHTFSNSFGAVPFITLPHIFNRLDIGYWRGPTEIDLTSTPAPNAYRLLFGLSTVISGNMSTLNANQALLRFFQGSNGTLHGRIKKIGTALTTCSLLLSLRHKDASLTLETAYQRPHYILADGQGAFSLPISTPHAATSFLEDMLRLEIFAIAGPFSPKDNKAKYQFMCYFDHIELVEGVPRTIAGEQQFNWCSFRNFKIDDWKFEWPARLPDILDDKSEVLLRQHPLSLLISSTGFFTGRAIFVFQWGLNTTAGNMKGSFSARLAFGKGVEEIEQTSTVQPLVGACEARIPVEFKTYTGYTTSGPPGSMEPYIYVRLTQAKLVDRLSVNVILQEGFSFYGPSVKHFKKEVGTPSATLGTNNPVGRPPENVDTGGPGGQYAAALQAAQQAGKNPFGRG.

Repeat copies occupy residues 554 to 606 and 607 to 659. The 2.5 X tandem repeats, Pro-rich stretch occupies residues 554-698; it reads SWSSPLPLFA…VSDEFMDVLP (145 aa). Residues 660-698 form a 3; truncated and approximate repeat; sequence SWSSPLPLFASFKVNRGACFLQVLPARKVVSDEFMDVLP. 2 stretches are compositionally biased toward polar residues: residues 1289-1303 and 1838-1847; these read SSLF…QQGT and PSATLGTNNP. Disordered regions lie at residues 1289 to 1320 and 1838 to 1863; these read SSLF…SSVQ and PSAT…PGGQ.

The protein belongs to the nepoviruses RNA2 polyprotein family. In terms of processing, specific enzymatic cleavages in vivo by the P1 encoded 3C-like protease yield mature proteins.

The protein resides in the host cell junction. It localises to the host plasmodesma. The protein localises to the virion. In terms of biological role, protein 2A: implicated in RNA2 replication. Could also be required for nematode transmission of the virus. Functionally, transports viral genome to neighboring plant cells directly through plasmosdesmata, without any budding. The movement protein allows efficient cell to cell propagation, by bypassing the host cell wall barrier. Acts by forming a tubular structure at the host plasmodesmata, enlarging it enough to allow free passage of virion capsids. This Tomato ringspot virus (isolate raspberry) (ToRSV) protein is RNA2 polyprotein.